A 1576-amino-acid polypeptide reads, in one-letter code: DExH-box ATP-dependent RNA helicase DExH2 (1576 aa).

An R3H domain is found at 15–78 (EATGAWATKV…ERRLSLFKGD (64 aa)). In terms of domain architecture, Helicase ATP-binding spans 227 to 396 (ISAVESNQVV…FGGCPVVRVP (170 aa)). 240-247 (GETGCGKT) contributes to the ATP binding site. The DEIH box signature appears at 343-346 (DEIH). In terms of domain architecture, Helicase C-terminal spans 561–735 (LIVKLMKKIC…ELCLQVKMLD (175 aa)). Disordered regions lie at residues 1137–1165 (ATSP…MGSK), 1177–1223 (MEES…SLNN), and 1260–1576 (DMGN…PSDQ). Positions 1281–1301 (PNSANSMDLGNMEENTPSDLA) are enriched in polar residues. Over residues 1305-1319 (KKKEPKSVSKLDLGS) the composition is skewed to basic and acidic residues. The PH1 motif lies at 1349 to 1360 (KQPEKKRSRSKK). The segment covering 1352–1363 (EKKRSRSKKRKS) has biased composition (basic residues). Over residues 1381–1412 (ANENEQTEPKSANNLDLGNMKENTPSDLANEN) the composition is skewed to polar residues. Positions 1454–1465 (KQPKKKRSRSKK) match the PH2 motif. The segment covering 1455–1467 (QPKKKRSRSKKCK) has biased composition (basic residues). Basic and acidic residues predominate over residues 1490–1508 (EQKDPESVNRLDPGKEKES). The segment covering 1509-1524 (IPSNLVSGNEQPDSNT) has biased composition (polar residues). Basic residues predominate over residues 1528-1537 (KKPKKKKRKL). The Nuclear localization signal signature appears at 1530–1537 (PKKKKRKL). Residues 1540–1562 (NFDSVNNMEEKMPSTNVLSQGNK) are compositionally biased toward polar residues.

Belongs to the DExH box helicase family. Homodimer.

The protein localises to the nucleus. The enzyme catalyses ATP + H2O = ADP + phosphate + H(+). Functionally, may function as an ATP-dependent RNA/DNA helicase. Binds DNA in vitro in a non-specific manner. The sequence is that of DExH-box ATP-dependent RNA helicase DExH2 from Arabidopsis thaliana (Mouse-ear cress).